A 165-amino-acid chain; its full sequence is Large ribosomal subunit protein uL10 (165 aa).

The protein belongs to the universal ribosomal protein uL10 family. Part of the ribosomal stalk of the 50S ribosomal subunit. The N-terminus interacts with L11 and the large rRNA to form the base of the stalk. The C-terminus forms an elongated spine to which L12 dimers bind in a sequential fashion forming a multimeric L10(L12)X complex.

Functionally, forms part of the ribosomal stalk, playing a central role in the interaction of the ribosome with GTP-bound translation factors. This Burkholderia lata (strain ATCC 17760 / DSM 23089 / LMG 22485 / NCIMB 9086 / R18194 / 383) protein is Large ribosomal subunit protein uL10.